The primary structure comprises 321 residues: Methionyl-tRNA formyltransferase (321 aa).

Residue 113-116 (SILP) participates in (6S)-5,6,7,8-tetrahydrofolate binding.

Belongs to the Fmt family.

It catalyses the reaction L-methionyl-tRNA(fMet) + (6R)-10-formyltetrahydrofolate = N-formyl-L-methionyl-tRNA(fMet) + (6S)-5,6,7,8-tetrahydrofolate + H(+). In terms of biological role, attaches a formyl group to the free amino group of methionyl-tRNA(fMet). The formyl group appears to play a dual role in the initiator identity of N-formylmethionyl-tRNA by promoting its recognition by IF2 and preventing the misappropriation of this tRNA by the elongation apparatus. This is Methionyl-tRNA formyltransferase from Pseudoalteromonas translucida (strain TAC 125).